Consider the following 241-residue polypeptide: Phosphoribosyl isomerase A (241 aa).

Aspartate 11 (proton acceptor) is an active-site residue. The active-site Proton donor is the aspartate 130.

This sequence belongs to the HisA/HisF family.

It is found in the cytoplasm. The catalysed reaction is 1-(5-phospho-beta-D-ribosyl)-5-[(5-phospho-beta-D-ribosylamino)methylideneamino]imidazole-4-carboxamide = 5-[(5-phospho-1-deoxy-D-ribulos-1-ylimino)methylamino]-1-(5-phospho-beta-D-ribosyl)imidazole-4-carboxamide. It catalyses the reaction N-(5-phospho-beta-D-ribosyl)anthranilate = 1-(2-carboxyphenylamino)-1-deoxy-D-ribulose 5-phosphate. The protein operates within amino-acid biosynthesis; L-histidine biosynthesis; L-histidine from 5-phospho-alpha-D-ribose 1-diphosphate: step 4/9. Its pathway is amino-acid biosynthesis; L-tryptophan biosynthesis; L-tryptophan from chorismate: step 3/5. Functionally, involved in both the histidine and tryptophan biosynthetic pathways. This is Phosphoribosyl isomerase A from Streptomyces griseus subsp. griseus (strain JCM 4626 / CBS 651.72 / NBRC 13350 / KCC S-0626 / ISP 5235).